The following is a 66-amino-acid chain: Myrmicitoxin(1)-Pr5a (66 aa).

The signal sequence occupies residues Met-1–Ala-25. A propeptide spanning residues Ile-26–Pro-37 is cleaved from the precursor. Val-65 is modified (valine amide).

It belongs to the formicidae venom clade 3 family. As to expression, expressed by the venom gland.

It is found in the secreted. Toxin that causes a rapid and irreversible paralysis when intrathoracically injected into insects (blowflies). Does not cause spontaneous nocifensive behaviors by intraplantar injection in mice. Exhibits hemolytic and cytotoxic activities on HEK293 cells. This Pogonomyrmex rugosus (Desert harvester ant) protein is Myrmicitoxin(1)-Pr5a.